We begin with the raw amino-acid sequence, 55 residues long: Accessory gland-specific peptide 70A (55 aa).

The signal sequence occupies residues 1-19; sequence MKTLALFLVLVCVLGLVQS. The essential for binding to sperm stretch occupies residues 20–33; the sequence is WEWPWNRKPTKFPI. A hydroxyproline mark is found at P28 and P32. I33 is subject to Isoleucine derivative. Hydroxyproline is present on residues P34, P36, and P38. The segment at 36–55 is sufficient to induce PMR; that stretch reads PNPRDKWCRLNLGPAWGGRC. C43 and C55 are oxidised to a cystine.

The protein belongs to the Drosophila sex peptide family. In terms of processing, sperm-bound protein is cleaved to release an active C-terminal peptide. Gradual release from stored sperm may function to prolong PMR and enhance male reproductive success. In terms of tissue distribution, main cells of the accessory glands of males (paragonial gland).

Its subcellular location is the secreted. In terms of biological role, male seminal protein which triggers short- and long-term post-mating behavioral responses (PMR) in female Drosophila. Binds initially to sperm where it is later cleaved to release an active peptide within the female reproductive tract. Signals via the sex peptide receptor (SPR) in female flies; may also act via other receptors. Moderates the activity of distinct neuronal circuitries in the female genital tract to promote specific PMRs including: enhanced ovulation, increased egg laying rate, increased feeding/foraging rate, induced antimicrobial peptide synthesis, reduced mating receptivity, reduced day-time sleep and reduced lifespan in multiple mated females. The protein is Accessory gland-specific peptide 70A (SP) of Drosophila melanogaster (Fruit fly).